The primary structure comprises 220 residues: MNSWTDAIGEEKTQPYFQHILQYVHQERLVGKVIYPPQNEVFSAFALTEFKDVKVVILGQDPYHGPNQAHGLSFSVKPGIVPPPSLVNMYKELSQDVGFQIPSHGYLIEWAKQGVLLLNTVLTVEQGKAHSHANIGWETFTDKVIHQLNLHRENLVFLLWGSHAQKKGQFIDRSRHCVLTAPHPSPLSAHRGFLGCRHFSKTNDYLRSHGVEEINWQLPL.

The active-site Proton acceptor is Asp-61.

This sequence belongs to the uracil-DNA glycosylase (UDG) superfamily. UNG family.

It localises to the cytoplasm. The catalysed reaction is Hydrolyzes single-stranded DNA or mismatched double-stranded DNA and polynucleotides, releasing free uracil.. In terms of biological role, excises uracil residues from the DNA which can arise as a result of misincorporation of dUMP residues by DNA polymerase or due to deamination of cytosine. This is Uracil-DNA glycosylase from Glaesserella parasuis serovar 5 (strain SH0165) (Haemophilus parasuis).